The chain runs to 250 residues: Anamorsin homolog 2 (250 aa).

The N-terminal SAM-like domain stretch occupies residues 1–102 (MNLKITINQQ…QTKKINIPQQ (102 aa)). Residues 102-149 (QDFNNCYGKYDYIEQKFQNQINFFKQVDLKGNQETIDENELLNDGVEV) are linker. Residues cysteine 155, cysteine 162, cysteine 165, and cysteine 167 each coordinate [2Fe-2S] cluster. A fe-S binding site A region spans residues 155–167 (CASKPRACANCTC). [4Fe-4S] cluster contacts are provided by cysteine 193, cysteine 196, cysteine 204, and cysteine 207. 2 short sequence motifs (cx2C motif) span residues 193–196 (CGSC) and 204–207 (CANC). Residues 193-207 (CGSCYLGDAFRCANC) are fe-S binding site B.

Belongs to the anamorsin family. In terms of assembly, monomer. [2Fe-2S] cluster is required as a cofactor. The cofactor is [4Fe-4S] cluster.

It is found in the cytoplasm. The protein resides in the mitochondrion intermembrane space. Functionally, component of the cytosolic iron-sulfur (Fe-S) protein assembly (CIA) machinery. Required for the maturation of extramitochondrial Fe-S proteins. Part of an electron transfer chain functioning in an early step of cytosolic Fe-S biogenesis, facilitating the de novo assembly of a [4Fe-4S] cluster on the cytosolic Fe-S scaffold complex. Electrons are transferred from NADPH via a FAD- and FMN-containing diflavin oxidoreductase. Together with the diflavin oxidoreductase, also required for the assembly of the diferric tyrosyl radical cofactor of ribonucleotide reductase (RNR), probably by providing electrons for reduction during radical cofactor maturation in the catalytic small subunit. This chain is Anamorsin homolog 2, found in Paramecium tetraurelia.